A 345-amino-acid polypeptide reads, in one-letter code: MKSLTLRRPDDWHLHLRDGAMLEGVIGDTSRHFARAIIMPNLVPPVVTTADASAYRERILKAIPEGDRFEPLMTLYLTEDTVADDVEEGKKSGLITAVKLYPAGATTNSHGGVRDFNKAMPVLERMAKIGLPLCVHGEVTTPDVDIFDREKAFIDTVLEPLRQRLPELKVTMEHITTRDGVDYIKSSNANLAGSITTHHLIINRNAILVGGIKPHYYCLPVAKREEHRLALRAAATSGDARFFLGTDSAPHVDPLKECACGCAGIYTSINTMSCLAHVFEDENALDKLEAFASLNGPAWYGLAPNDETITLVKREEAVAFPEKIETGAGPVTVFDPMFPLHWDVN.

His13 and His15 together coordinate Zn(2+). Substrate contacts are provided by residues 15-17 and Asn41; that span reads HLR. Zn(2+) contacts are provided by Lys99, His136, and His174. Lys99 carries the post-translational modification N6-carboxylysine. His136 provides a ligand contact to substrate. Leu219 lines the substrate pocket. A Zn(2+)-binding site is contributed by Asp247. Asp247 is a catalytic residue. Residues His251 and Ala263 each coordinate substrate.

Belongs to the metallo-dependent hydrolases superfamily. DHOase family. Class II DHOase subfamily. Homodimer. Requires Zn(2+) as cofactor.

The catalysed reaction is (S)-dihydroorotate + H2O = N-carbamoyl-L-aspartate + H(+). It participates in pyrimidine metabolism; UMP biosynthesis via de novo pathway; (S)-dihydroorotate from bicarbonate: step 3/3. Catalyzes the reversible cyclization of carbamoyl aspartate to dihydroorotate. The sequence is that of Dihydroorotase from Agrobacterium fabrum (strain C58 / ATCC 33970) (Agrobacterium tumefaciens (strain C58)).